The chain runs to 137 residues: Universal stress protein HP_0031 (137 aa).

It belongs to the universal stress protein A family.

The polypeptide is Universal stress protein HP_0031 (Helicobacter pylori (strain ATCC 700392 / 26695) (Campylobacter pylori)).